The sequence spans 319 residues: N-acetyl-D-glucosamine kinase (319 aa).

Threonine 14 serves as a coordination point for ATP. The substrate site is built by asparagine 37 and aspartate 113. Threonine 135 lines the ATP pocket. Substrate contacts are provided by residues 153-155 (GWG) and aspartate 160. Position 220 (alanine 220) interacts with ATP.

This sequence belongs to the eukaryotic-type N-acetylglucosamine kinase family. Homodimer.

It carries out the reaction N-acetyl-D-glucosamine + ATP = N-acetyl-D-glucosamine 6-phosphate + ADP + H(+). Converts N-acetylglucosamine (GlcNAc), a major component of complex carbohydrates, into GlcNAc 6-phosphate. Also has ManNAc kinase activity. This chain is N-acetyl-D-glucosamine kinase (nagk), found in Dictyostelium discoideum (Social amoeba).